An 809-amino-acid chain; its full sequence is Poly(A) polymerase (809 aa).

Residues 1–50 are disordered; that stretch reads MNKNGGPPVANITTSSTTITSTTTTQAKSQLPSSLSVNNLHTTQGSTDQP. Residues 12-25 are compositionally biased toward low complexity; the sequence is ITTSSTTITSTTTT. A compositionally biased stretch (polar residues) spans 26–50; it reads QAKSQLPSSLSVNNLHTTQGSTDQP. Residues 133 to 135, 146 to 148, aspartate 200, lysine 262, tyrosine 271, and 280 to 281 each bind ATP; these read FGS, DID, and GV. Mg(2+)-binding residues include aspartate 146, aspartate 148, and aspartate 200. Disordered regions lie at residues 529 to 760 and 785 to 809; these read FVKD…QQIQ and ISSS…IRGN. The span at 530–540 shows a compositional bias: basic and acidic residues; the sequence is VKDEGPEEPVK. Residues 572–655 are compositionally biased toward low complexity; it reads SPITTNINST…TPPTTTTINS (84 aa). Residues 656–665 show a composition bias toward polar residues; that stretch reads VQPPSAQPTE. Over residues 666 to 706 the composition is skewed to low complexity; that stretch reads NGSSTSNSPTSTSINNTALPPNPTTNSESTIETTITLPTTL. Over residues 707-735 the composition is skewed to polar residues; sequence ESQTSTLKDSNEISTNGTAVATEPTITSP. Low complexity-rich tracts occupy residues 736-760 and 785-794; these read SVNI…QQIQ and ISSSSETSQS.

The protein belongs to the poly(A) polymerase family. Requires Mg(2+) as cofactor. It depends on Mn(2+) as a cofactor.

The protein localises to the nucleus. It carries out the reaction RNA(n) + ATP = RNA(n)-3'-adenine ribonucleotide + diphosphate. Polymerase that creates the 3'-poly(A) tail of mRNA's. May acquire specificity through interaction with a cleavage and polyadenylation factor. The sequence is that of Poly(A) polymerase (papA) from Dictyostelium discoideum (Social amoeba).